The sequence spans 114 residues: Non-specific lipid-transfer protein 1 (114 aa).

Positions 1–25 (MIKGLAITVVAVLAVVQLLARPSDA) are cleaved as a signal peptide. 4 cysteine pairs are disulfide-bonded: C29-C76, C39-C53, C54-C99, and C74-C113.

This sequence belongs to the plant LTP family. Expressed in seeds and, at very low levels, in pulp of fruit (at protein level).

Its function is as follows. Plant non-specific lipid-transfer proteins transfer phospholipids as well as galactolipids across membranes. May play a role in wax or cutin deposition in the cell walls of expanding epidermal cells and certain secretory tissues. This is Non-specific lipid-transfer protein 1 from Actinidia chinensis var. chinensis (Chinese soft-hair kiwi).